We begin with the raw amino-acid sequence, 1082 residues long: Mediator of RNA polymerase II transcription subunit 14 (1082 aa).

Disordered stretches follow at residues 1-80 (MTTT…APPP) and 319-343 (EATS…NLPL). Thr-2 is subject to N-acetylthreonine. Ser-7 carries the post-translational modification Phosphoserine. The span at 13–28 (NEERLSNEMHALKNRS) shows a compositional bias: basic and acidic residues. Residues 29–59 (EQNGQEQQGPVKNTQLHGPSATDPETTATQK) show a composition bias toward polar residues. Low complexity predominate over residues 321–340 (TSTNGDSENNEENSSSNGNN). Thr-1036 is subject to Phosphothreonine.

This sequence belongs to the Mediator complex subunit 14 family. In terms of assembly, component of the Mediator complex, which is composed of at least 21 subunits that form three structurally distinct submodules. The Mediator head module contains MED6, MED8, MED11, SRB4/MED17, SRB5/MED18, ROX3/MED19, SRB2/MED20 and SRB6/MED22, the middle module contains MED1, MED4, NUT1/MED5, MED7, CSE2/MED9, NUT2/MED10, SRB7/MED21 and SOH1/MED31, and the tail module contains MED2, PGD1/MED3, RGR1/MED14, GAL11/MED15 and SIN4/MED16. The head and the middle modules interact directly with RNA polymerase II, whereas the elongated tail module interacts with gene-specific regulatory proteins.

The protein localises to the nucleus. Component of the Mediator complex, a coactivator involved in the regulated transcription of nearly all RNA polymerase II-dependent genes. Mediator functions as a bridge to convey information from gene-specific regulatory proteins to the basal RNA polymerase II transcription machinery. The Mediator complex, having a compact conformation in its free form, is recruited to promoters by direct interactions with regulatory proteins and serves for the assembly of a functional preinitiation complex with RNA polymerase II and the general transcription factors. The Mediator complex unfolds to an extended conformation and partially surrounds RNA polymerase II, specifically interacting with the unphosphorylated form of the C-terminal domain (CTD) of RNA polymerase II. The Mediator complex dissociates from the RNA polymerase II holoenzyme and stays at the promoter when transcriptional elongation begins. In Saccharomyces cerevisiae (strain ATCC 204508 / S288c) (Baker's yeast), this protein is Mediator of RNA polymerase II transcription subunit 14 (RGR1).